Here is a 280-residue protein sequence, read N- to C-terminus: Protease HtpX (280 aa).

Transmembrane regions (helical) follow at residues 7-26 and 30-49; these read TFILLASLTALLVVIGGLLG and GMLIALVFAGVMNFSAYWYS. Residue His-129 participates in Zn(2+) binding. Glu-130 is a catalytic residue. His-133 lines the Zn(2+) pocket. The next 2 helical transmembrane spans lie at 146-166 and 178-198; these read ATIAGAISGIANMFMWLSMFG and VVGMIMMIVAPLAAGLIQMAI. Glu-203 is a binding site for Zn(2+).

The protein belongs to the peptidase M48B family. Zn(2+) serves as cofactor.

It localises to the cell inner membrane. In Legionella pneumophila subsp. pneumophila (strain Philadelphia 1 / ATCC 33152 / DSM 7513), this protein is Protease HtpX.